The following is a 395-amino-acid chain: Zinc finger protein HD1 (395 aa).

The B box-type 1; atypical zinc-finger motif lies at 30 to 72 (PWARPCDGCRAAPSVVYCRADAAYLCASCDARVHAANRVASRH). Zn(2+)-binding residues include Cys-35, Cys-38, Cys-58, His-63, Cys-78, Cys-81, Cys-101, and His-106. The segment at 73–117 (ERVRVCEACERAPAALACRADAAALCVACDVQVHSANPLPAITIP) adopts a B box-type 2; atypical zinc-finger fold. 2 disordered regions span residues 147–176 (SKDSDNNNNNNNNNDNDNNDNNNSNSSNNG) and 208–228 (GMHEQQEQQQQQQEMQKEFAE). The segment covering 152–175 (NNNNNNNNNDNDNNDNNNSNSSNN) has biased composition (low complexity). In terms of domain architecture, CCT spans 326 to 368 (REARVLRYREKKKARKFEKTIRYETRKAYAEARPRIKGRFAKR).

The protein belongs to the CONSTANS family. As to quaternary structure, interacts with HAL3 in the dark. Phosphorylated by OSK4 in the presence of HDR1.

Its subcellular location is the nucleus. Probable transcription factor involved in the regulation of flower development. Required for the promotion of flowering under short day (SD) conditions and the suppression of flowering under long day (LD) conditions. Positively regulates the floral activator HEADING DATE 3a (HD3A) under SD and negatively under LD conditions. This is Zinc finger protein HD1 from Oryza sativa subsp. japonica (Rice).